We begin with the raw amino-acid sequence, 211 residues long: Large ribosomal subunit protein uL3 (211 aa).

At Gln150 the chain carries N5-methylglutamine.

It belongs to the universal ribosomal protein uL3 family. Part of the 50S ribosomal subunit. Forms a cluster with proteins L14 and L19. In terms of processing, methylated by PrmB.

In terms of biological role, one of the primary rRNA binding proteins, it binds directly near the 3'-end of the 23S rRNA, where it nucleates assembly of the 50S subunit. This is Large ribosomal subunit protein uL3 from Pseudomonas syringae pv. tomato (strain ATCC BAA-871 / DC3000).